Reading from the N-terminus, the 699-residue chain is Glutamine--fructose-6-phosphate aminotransferase [isomerizing] (699 aa).

The Nucleophile role is filled by Cys-2. Residues 2-303 (CGIFGYANFS…DNDIVHISNG (302 aa)) enclose the Glutamine amidotransferase type-2 domain. SIS domains lie at 377 to 516 (HVSG…QNLV) and 544 to 689 (SVKS…ADFP).

The enzyme catalyses D-fructose 6-phosphate + L-glutamine = D-glucosamine 6-phosphate + L-glutamate. It participates in nucleotide-sugar biosynthesis; UDP-N-acetyl-alpha-D-glucosamine biosynthesis; alpha-D-glucosamine 6-phosphate from D-fructose 6-phosphate: step 1/1. Functionally, involved in amino sugar synthesis (formation of chitin, supplies the amino sugars of asparagine-linked oligosaccharides of glycoproteins). This chain is Glutamine--fructose-6-phosphate aminotransferase [isomerizing] (GFA1), found in Encephalitozoon cuniculi (strain GB-M1) (Microsporidian parasite).